A 117-amino-acid chain; its full sequence is uncharacterized protein (117 aa).

Residues Met-1–Pro-19 show a composition bias toward polar residues. The interval Met-1–Glu-28 is disordered. The next 2 helical transmembrane spans lie at Ala-38–Ile-58 and Leu-76–Ala-96.

Its subcellular location is the cell membrane. This is an uncharacterized protein from Mycobacterium tuberculosis (strain ATCC 25618 / H37Rv).